Reading from the N-terminus, the 843-residue chain is Probable cleavage and polyadenylation specificity factor subunit 2 (843 aa).

Over residues 414 to 425 (AEETRLRMERAR) the composition is skewed to basic and acidic residues. 2 disordered regions span residues 414 to 443 (AEET…DIAA) and 691 to 753 (DKNR…TKGK). Acidic residues predominate over residues 432-441 (ESDDSDDDDI). Residues 732–746 (SGKEVENGHTNDSRT) are compositionally biased toward basic and acidic residues.

It belongs to the metallo-beta-lactamase superfamily. RNA-metabolizing metallo-beta-lactamase-like family. CPSF2/YSH1 subfamily. In terms of assembly, CPSF is a heterotetramer composed of four distinct subunits 160, 100, 70 and 30 kDa.

The protein localises to the nucleus. Functionally, CPSF plays a key role in pre-mRNA 3'-end formation, recognizing the AAUAAA signal sequence and interacting with poly(A)polymerase and other factors to bring about cleavage and poly(A) addition. The chain is Probable cleavage and polyadenylation specificity factor subunit 2 (cpsf-2) from Caenorhabditis elegans.